Consider the following 1159-residue polypeptide: ATP-dependent helicase/deoxyribonuclease subunit B (1159 aa).

The 401-residue stretch at 1 to 401 (MSIRFVYGRS…LLKNWSYESV (401 aa)) folds into the UvrD-like helicase ATP-binding domain. Residue 8-15 (GRSGTGKS) coordinates ATP. The UvrD-like helicase C-terminal domain maps to 279–582 (PYRFKGNLEL…NIGDIARIKG (304 aa)). [4Fe-4S] cluster-binding residues include C787, C1106, C1109, and C1115.

It belongs to the helicase family. AddB/RexB type 1 subfamily. As to quaternary structure, heterodimer of AddA and AddB. The cofactor is Mg(2+). It depends on [4Fe-4S] cluster as a cofactor.

Functionally, the heterodimer acts as both an ATP-dependent DNA helicase and an ATP-dependent, dual-direction single-stranded exonuclease. Recognizes the chi site generating a DNA molecule suitable for the initiation of homologous recombination. The AddB subunit has 5' -&gt; 3' nuclease activity but not helicase activity. The polypeptide is ATP-dependent helicase/deoxyribonuclease subunit B (Clostridium beijerinckii (strain ATCC 51743 / NCIMB 8052) (Clostridium acetobutylicum)).